Consider the following 301-residue polypeptide: Glycine cleavage system transcriptional activator homolog (301 aa).

The HTH lysR-type domain maps to 10–67 (PPLNSLKSFESAARYLSFTKAADELCVTQAAVSHQIKLLEXFLGIDLFKRKNRSLELT). The segment at residues 27–46 (FTKAADELCVTQAAVSHQIK) is a DNA-binding region (H-T-H motif).

It belongs to the LysR transcriptional regulatory family.

The protein localises to the cytoplasm. In terms of biological role, not known, the gcv operon regulated by the E.coli homolog does not exist in H.influenzae, so it probably acts as a transcriptional regulator on some other operon. The protein is Glycine cleavage system transcriptional activator homolog (gcvA) of Haemophilus influenzae (strain ATCC 51907 / DSM 11121 / KW20 / Rd).